A 222-amino-acid polypeptide reads, in one-letter code: Superoxide dismutase [Mn], mitochondrial (222 aa).

The N-terminal 24 residues, Met-1–Gln-24, are a transit peptide targeting the mitochondrion. A Mn(2+)-binding site is contributed by His-50. The residue at position 58 (Tyr-58) is a 3'-nitrotyrosine. Lys-68 and Lys-75 each carry N6-acetyllysine; alternate. 2 positions are modified to N6-succinyllysine; alternate: Lys-68 and Lys-75. His-98 is a binding site for Mn(2+). N6-acetyllysine is present on Lys-114. N6-acetyllysine; alternate occurs at positions 122 and 130. N6-succinyllysine; alternate is present on residues Lys-122 and Lys-130. Mn(2+) is bound by residues Asp-183 and His-187. The residue at position 202 (Lys-202) is an N6-acetyllysine.

It belongs to the iron/manganese superoxide dismutase family. As to quaternary structure, homotetramer. Mn(2+) serves as cofactor. In terms of processing, nitrated under oxidative stress. Nitration coupled with oxidation inhibits the catalytic activity. Acetylation at Lys-122 decreases enzymatic activity. Deacetylated by SIRT3 upon exposure to ionizing radiations or after long fasting. Post-translationally, polyubiquitinated; leading to proteasomal degradation. Deubiquitinated by USP36 which increases protein stability.

The protein localises to the mitochondrion matrix. The catalysed reaction is 2 superoxide + 2 H(+) = H2O2 + O2. Destroys superoxide anion radicals which are normally produced within the cells and which are toxic to biological systems. This Homo sapiens (Human) protein is Superoxide dismutase [Mn], mitochondrial (SOD2).